The primary structure comprises 439 residues: Ribosomal protein uS12 methylthiotransferase RimO (439 aa).

The region spanning 6–116 is the MTTase N-terminal domain; sequence GKVGFVSLGC…VMNQVHQVAP (111 aa). [4Fe-4S] cluster-binding residues include Cys15, Cys51, Cys80, Cys148, Cys152, and Cys155. Positions 134–371 constitute a Radical SAM core domain; the sequence is LTPKHYAYLK…MEVQQRISAS (238 aa). The TRAM domain maps to 374 to 439; it reads QAKIGKRMDV…DEYDLWGRPV (66 aa).

Belongs to the methylthiotransferase family. RimO subfamily. The cofactor is [4Fe-4S] cluster.

It is found in the cytoplasm. It catalyses the reaction L-aspartate(89)-[ribosomal protein uS12]-hydrogen + (sulfur carrier)-SH + AH2 + 2 S-adenosyl-L-methionine = 3-methylsulfanyl-L-aspartate(89)-[ribosomal protein uS12]-hydrogen + (sulfur carrier)-H + 5'-deoxyadenosine + L-methionine + A + S-adenosyl-L-homocysteine + 2 H(+). Its function is as follows. Catalyzes the methylthiolation of an aspartic acid residue of ribosomal protein uS12. The protein is Ribosomal protein uS12 methylthiotransferase RimO of Hahella chejuensis (strain KCTC 2396).